We begin with the raw amino-acid sequence, 393 residues long: GDNF family receptor alpha-like (393 aa).

The first 19 residues, 1–19, serve as a signal peptide directing secretion; that stretch reads MLVFIFLAVTLSSENESSS. Residues 20-349 are Extracellular-facing; sequence QTNDCAHLIQ…LTGFNSFFNG (330 aa). N-linked (GlcNAc...) asparagine glycans are attached at residues Asn59, Asn65, Asn101, and Asn115. Intrachain disulfides connect Cys131–Cys189, Cys138–Cys144, Cys155–Cys167, Cys162–Cys210, Cys191–Cys198, Cys220–Cys291, Cys227–Cys233, Cys244–Cys275, Cys252–Cys258, Cys269–Cys316, and Cys293–Cys304. Residues 149-228 form a required for interaction with GDF15 region; sequence ALYLKACSAN…TCLSVIHTCR (80 aa). The helical transmembrane segment at 350–370 threads the bilayer; the sequence is ELLYVVVCMAVTCGILFLVML. The Cytoplasmic segment spans residues 371-393; sequence KLRIQSEKRDPSSIEIAGGVIIQ.

It belongs to the GDNFR family. Interacts (via the extracellular domain) with GDF15 and RET; receptor of GDF15, mediates cellular signaling through interaction with RET after GDF15-binding. Interaction with RET requires previous GDF15-binding. In terms of processing, cleaved and inactivated by MMP14, inhibiting the GDF15-GFRAL aversive response. As to expression, expressed in the brainstem, restricted to cells in the area postrema and the immediately adjacent region of the nucleus tractus solitarius.

It localises to the cell membrane. With respect to regulation, specifically inhibited by 3P10 monoclonal antibody. Strongly activated by LY3463251, a long-acting and stable agonist composed of GDF15 conjugated monomeric human IgG4 Fc. Its function is as follows. Brainstem-restricted receptor for GDF15 hormone, which triggers an aversive response, characterized by nausea, vomiting, and/or loss of appetite in response to various stresses. The aversive response is both required to reduce continuing exposure to those stresses at the time of exposure and to promote avoidance behavior in the future. The GDF15-GFRAL aversive response is triggered by stresses, such as anticancer drugs (camptothecin or cisplatin), cancers or drugs such as metformin. Upon interaction with its ligand, GDF15, mediates the GDF15-induced autophosphorylation and activation of the RET tyrosine kinase receptor, leading to activation of MAPK- and AKT- signaling pathways. Ligand-binding activates GFRAL-expressing neurons localized in the area postrema and nucleus tractus solitarius of the brainstem. The GDF15-GFRAL signal induces expression of genes involved in metabolism, such as lipid metabolism in adipose tissues. This is GDNF family receptor alpha-like (Gfral) from Mus musculus (Mouse).